The sequence spans 572 residues: Mitochondrial chaperone TCM62 (572 aa).

The N-terminal 16 residues, 1-16 (MLRNCLRKLGNHQTKC), are a transit peptide targeting the mitochondrion. The Mitochondrial matrix segment spans residues 17-471 (SVKTLHTPIY…KANEPNFMTK (455 aa)). The chain crosses the membrane as a helical span at residues 472–488 (VGINAVLSAVILPSEVA). The Mitochondrial intermembrane segment spans residues 489–572 (FKNAYGYNYY…VYKKPERHKA (84 aa)).

Belongs to the chaperonin (HSP60) family. As to quaternary structure, forms a high molecular mass protein complex of approximately 850 kDa.

It is found in the mitochondrion inner membrane. Chaperone. Required for the assembly of succinate dehydrogenase subunits. Ensures mitochondrial gene expression at elevated temperatures and prevents heat-aggregation of the ribosomal subunit VAR1. This is Mitochondrial chaperone TCM62 (TCM62) from Saccharomyces cerevisiae (strain YJM789) (Baker's yeast).